The following is a 252-amino-acid chain: T-box transcription factor mls-1 (252 aa).

Positions 40-210 (LWRRFHNLGT…SNPFAKGFRE (171 aa)) form a DNA-binding region, T-box.

May interact with unc-37.

The protein localises to the nucleus. Its function is as follows. Probable transcription factor required for the cell fate specification of non-striated uterine muscle precursor cells. Furthermore, may function with the transcriptional corepressor unc-37. This Caenorhabditis elegans protein is T-box transcription factor mls-1.